The sequence spans 153 residues: Endoribonuclease YbeY (153 aa).

Residues His-118, His-122, and His-128 each coordinate Zn(2+).

It belongs to the endoribonuclease YbeY family. Zn(2+) is required as a cofactor.

The protein resides in the cytoplasm. Its function is as follows. Single strand-specific metallo-endoribonuclease involved in late-stage 70S ribosome quality control and in maturation of the 3' terminus of the 16S rRNA. This chain is Endoribonuclease YbeY, found in Oenococcus oeni (strain ATCC BAA-331 / PSU-1).